Here is a 312-residue protein sequence, read N- to C-terminus: R2-like ligand binding oxidase (312 aa).

Mn(2+) contacts are provided by Glu-68, Glu-101, and His-104. The segment at residues 71-162 is a cross-link (3-(O4'-tyrosyl)-valine (Val-Tyr)); sequence VTQDIQPFMA…AAQVRASVTY (92 aa). Glu-101 is a Fe cation binding site. Residues Glu-167, Glu-202, and His-205 each contribute to the Fe cation site.

The protein belongs to the ribonucleoside diphosphate reductase small chain family. R2-like ligand binding oxidase subfamily. In terms of assembly, homodimer. Fe cation is required as a cofactor. The cofactor is Mn(2+).

Functionally, probable oxidase that might be involved in lipid metabolism. This Mycolicibacterium vanbaalenii (strain DSM 7251 / JCM 13017 / BCRC 16820 / KCTC 9966 / NRRL B-24157 / PYR-1) (Mycobacterium vanbaalenii) protein is R2-like ligand binding oxidase.